A 124-amino-acid polypeptide reads, in one-letter code: Orexigenic neuropeptide QRFP (124 aa).

Residues 1-17 form the signal peptide; it reads MRGFRPLLSLLLPLSAC. Residues 18–79 constitute a propeptide that is removed on maturation; it reads FPLLDRRGPT…REHTGFRLGR (62 aa). The segment at 63 to 101 is disordered; sequence REQQASHREHTGFRLGRQDGSSEAAGFLPADSEKASGPL. At Phe-122 the chain carries Phenylalanine amide.

The protein belongs to the RFamide neuropeptide family. As to quaternary structure, ligand for the G-protein coupled receptor QRFPR/GPR103. Expressed in the brain with highest levels in the periventricular hypothalamic nucleus and lateral hypothalamic areas. Expressed at moderate levels in the adrenal gland, eye, heart, intestine, liver, lung, kidney, mesenteric lymph node, ovary, placenta, Peyer patches, skin, spleen, stomach, testis, thymus and uterus.

The protein localises to the secreted. Its function is as follows. Stimulates feeding and grooming behavior, metabolic rate and locomotor activity and increases blood pressure. May have orexigenic activity. May promote aldosterone secretion by the adrenal gland. This is Orexigenic neuropeptide QRFP from Mus musculus (Mouse).